The following is a 357-amino-acid chain: Protein-L-isoaspartate O-methyltransferase domain-containing protein 1 (357 aa).

Gly2 carries N-myristoyl glycine lipidation. Ser64 is an active-site residue. 3 adoMet binding motif regions span residues 85-94, 160-164, and 181-191; these read LNLGSGTGYL, YDRIY, and LKVGGILVMPI. The tract at residues 240–250 is BC-box; that stretch reads VRNLQDLARIY. The tract at residues 299-331 is disordered; sequence PLDSEEDEKMEEDSKEEEEKEHIEAMKREEPPQ. Residues 301 to 317 are compositionally biased toward acidic residues; the sequence is DSEEDEKMEEDSKEEEE. Positions 318–331 are enriched in basic and acidic residues; sequence KEHIEAMKREEPPQ. A CUL-box region spans residues 341 to 344; that stretch reads LPLP.

Belongs to the methyltransferase superfamily. L-isoaspartyl/D-aspartyl protein methyltransferase family. Component of the probable ECS(PCMTD1) E3 ubiquitin-protein ligase complex, at least composed of CUL5, ELOB, ELOC, RBX2 and PCMTD1. Interacts (via the BC-box) with ELOB and ELOC; the interaction is direct and stabilizes PCMTD1.

It localises to the cytoplasm. The protein localises to the membrane. In terms of biological role, substrate recognition component of an ECS (Elongin BC-CUL5-SOCS-box protein) E3 ubiquitin ligase complex which mediates the ubiquitination and subsequent proteasomal degradation of target proteins. Specifically binds to the methyltransferase cofactor S-adenosylmethionine (AdoMet) via the N-terminal AdoMet binding motif, but does not display methyltransferase activity. May provide an alternate maintenance pathway for modified proteins by acting as a damage-specific E3 ubiquitin ligase adaptor protein. In Mus musculus (Mouse), this protein is Protein-L-isoaspartate O-methyltransferase domain-containing protein 1 (Pcmtd1).